We begin with the raw amino-acid sequence, 357 residues long: MKVLAALALSALAMAKPTPPMPGMSLVQTGPQETRWVTAKEKHDMVMNHIGFFDITNRPESASIASKPKSYAFPGNVSHQAEVKPLLEKISADHIKSNLEMFSSYPNRYYDAQSGVESAQWVMEQAQAVVGNIQGAKVEMVKHDWMQPSIRAIIPGKSEKIVAVGAHQDSINGKNPQGEAPGADDNGSGSMTILEALTALVSDQKIAGGEAANTLEFHWYAGEEEGLLGSQDIFQQYSQEGKEVVAMLNQDMTGYGETMGVITDNSDPNLTKFTKMILDTYTSAKYSDSECGYACSDHASANKAGFPSAFVYEAVVGQDNPAIHSPDDTIEKLDPAKMAEHAKLVVGFAYELAFATL.

The N-terminal stretch at Met1–Ala15 is a signal peptide. The N-linked (GlcNAc...) asparagine glycan is linked to Asn76. Residues His167 and Asp185 each contribute to the Zn(2+) site. A disordered region spans residues Asp169–Ser188. The N-linked (GlcNAc...) asparagine glycan is linked to Asn186. The Zn(2+) site is built by Glu224 and Asp251. Asn269 is a glycosylation site (N-linked (GlcNAc...) asparagine). An intrachain disulfide couples Cys291 to Cys295. His324 lines the Zn(2+) pocket.

The protein belongs to the peptidase M28 family. M28E subfamily. As to quaternary structure, monomer. The cofactor is Zn(2+).

The protein resides in the secreted. Its function is as follows. Probable extracellular aminopeptidase which contributes to pathogenicity. In Trichophyton verrucosum (strain HKI 0517), this protein is Probable leucine aminopeptidase TRV_02148.1.